Consider the following 597-residue polypeptide: Probable HECT-type ubiquitin ligase-interacting protein creD (597 aa).

Disordered stretches follow at residues 375–398 (ELDPNGYRTPGPGSGPGTPFGTLS) and 432–499 (LNIT…MATP). Residues 443 to 455 (TDHESQNDSEHRR) show a composition bias toward basic and acidic residues. Residues 465-481 (PSSGSNSHSPSSPVLSR) show a composition bias toward low complexity. The span at 482 to 492 (RPSDEVDHEHV) shows a compositional bias: basic and acidic residues.

This sequence belongs to the arrestin family. In terms of assembly, interacts with hulA.

In terms of biological role, component of the regulatory network controlling carbon source utilization through ubiquitination and deubiquitination involving creA, creB, creC, creD and acrB. May be involved in signaling by recognizing appropriately phosphorylated substrates via its arrestin domains and then recruit a HECT-type ubiquitin ligase such as hulA, leading to ubiquitination of the substrate, providing a link between ubiquitination and phosphorylation in protein regulation and stability. The protein is Probable HECT-type ubiquitin ligase-interacting protein creD (creD) of Aspergillus oryzae (strain ATCC 42149 / RIB 40) (Yellow koji mold).